The following is a 618-amino-acid chain: Proline--tRNA ligase (618 aa).

This sequence belongs to the class-II aminoacyl-tRNA synthetase family. ProS type 1 subfamily. In terms of assembly, homodimer.

It is found in the cytoplasm. It carries out the reaction tRNA(Pro) + L-proline + ATP = L-prolyl-tRNA(Pro) + AMP + diphosphate. In terms of biological role, catalyzes the attachment of proline to tRNA(Pro) in a two-step reaction: proline is first activated by ATP to form Pro-AMP and then transferred to the acceptor end of tRNA(Pro). As ProRS can inadvertently accommodate and process non-cognate amino acids such as alanine and cysteine, to avoid such errors it has two additional distinct editing activities against alanine. One activity is designated as 'pretransfer' editing and involves the tRNA(Pro)-independent hydrolysis of activated Ala-AMP. The other activity is designated 'posttransfer' editing and involves deacylation of mischarged Ala-tRNA(Pro). The misacylated Cys-tRNA(Pro) is not edited by ProRS. The protein is Proline--tRNA ligase of Streptococcus pyogenes serotype M12 (strain MGAS2096).